Reading from the N-terminus, the 380-residue chain is Homoserine O-acetyltransferase (380 aa).

The AB hydrolase-1 domain maps to 59 to 363; the sequence is NVVMVLHALT…IYGHDGFLVE (305 aa). Catalysis depends on Ser164, which acts as the Nucleophile. Arg234 serves as a coordination point for substrate. Catalysis depends on residues Asp327 and His357. Residue Asp358 coordinates substrate.

The protein belongs to the AB hydrolase superfamily. MetX family. In terms of assembly, homodimer.

Its subcellular location is the cytoplasm. It carries out the reaction L-homoserine + acetyl-CoA = O-acetyl-L-homoserine + CoA. It participates in amino-acid biosynthesis; L-methionine biosynthesis via de novo pathway; O-acetyl-L-homoserine from L-homoserine: step 1/1. Transfers an acetyl group from acetyl-CoA to L-homoserine, forming acetyl-L-homoserine. The sequence is that of Homoserine O-acetyltransferase from Mycolicibacterium smegmatis (strain ATCC 700084 / mc(2)155) (Mycobacterium smegmatis).